Consider the following 188-residue polypeptide: MDKLNFFEEIRKDAEETYKLNPEDADNLMRWGEALLELSQFQNVIDSLKMIQDAISKLEDAILIDPMKHDAVWCLGNAYTSYARLTPDDTQARLNFGLAYLFFGIAVAQQPDNQVYHKSLEMADKAPQLHTGFHKNRLLSLLGGVETLAIPSPKVVKNKKSSDEKYIVMGWVILAIGVVACISFRKLR.

Residues 1–164 (MDKLNFFEEI…VVKNKKSSDE (164 aa)) lie on the Cytoplasmic side of the membrane. A helical transmembrane segment spans residues 165–182 (KYIVMGWVILAIGVVACI). Residues 183 to 188 (SFRKLR) lie on the Mitochondrial intermembrane side of the membrane.

It belongs to the Tom20 family. Forms part of the preprotein translocase complex of the outer mitochondrial membrane (TOM complex) which consists of at least 6 different proteins (TOM5, TOM6, TOM7, TOM20, TOM22/TOM9 and TOM40). Component of a mitochondrial large protein complex that contains, at least, MIC60, DGS1, TOM40, TOM20 proteins, and petC/RISP. In terms of tissue distribution, barely detected in roots.

It is found in the mitochondrion outer membrane. In terms of biological role, central component of the receptor complex responsible for the recognition and translocation of cytosolically synthesized mitochondrial preproteins. Together with TOM22 functions as the transit peptide receptor at the surface of the mitochondrion outer membrane and facilitates the movement of preproteins into the translocation pore. This chain is Mitochondrial import receptor subunit TOM20-1, found in Arabidopsis thaliana (Mouse-ear cress).